The following is a 108-amino-acid chain: uncharacterized protein (108 aa).

Positions 81 to 108 (TNHHQQQQNHQNQQQQQQQPNGIFENNI) are disordered. Residues 83-99 (HHQQQQNHQNQQQQQQQ) are compositionally biased toward low complexity.

This is an uncharacterized protein from Dictyostelium discoideum (Social amoeba).